Here is a 210-residue protein sequence, read N- to C-terminus: Ras-related protein Rab-8 (210 aa).

Position 15-22 (15-22) interacts with GTP; the sequence is GDSGVGKT. An Effector region motif is present at residues 37–45; sequence FISTIGIDF. Residues 63–67 and 121–124 contribute to the GTP site; these read DTAGQ and NKCD. The residue at position 207 (Cys-207) is a Cysteine methyl ester. Cys-207 is lipidated: S-geranylgeranyl cysteine. Positions 208 to 210 are cleaved as a propeptide — removed in mature form; that stretch reads SLL.

This sequence belongs to the small GTPase superfamily. Rab family.

It is found in the cell membrane. The protein is Ras-related protein Rab-8 of Diplobatis ommata (Ocellated electric ray).